Reading from the N-terminus, the 626-residue chain is Probable potassium transport system protein Kup (626 aa).

Transmembrane regions (helical) follow at residues 8-28, 44-64, 102-122, 139-159, 171-191, 196-216, 217-237, 249-269, 281-301, 339-359, 377-397, 399-419, and 421-441; these read VALPAMTLAALGVVFGDIGTS, ISEATVFGILSLIFWCITLSI, IYLIALGFVGASLFFGDGIIT, PAFDRWLIPIGLGILTALFMV, FGPITMLWFISIGALGLYSII, ILWFINPIWAIEFAIHQPFVA, FVAMGSVVLTMTGGEALYADM, WFIVVCPSLMLNYAGQGALLL, LLVPEWALFPMIGLATAAAVI, IYVPFINWVLYISVFFLIILF, MLCVTILISVLAYGAWGWPWW, VTLFAVPFLALDGIFVASTSL, and ILSGGWVPFVIGVVVFTILMT.

It belongs to the HAK/KUP transporter (TC 2.A.72) family.

The protein localises to the cell inner membrane. The enzyme catalyses K(+)(in) + H(+)(in) = K(+)(out) + H(+)(out). Functionally, transport of potassium into the cell. Likely operates as a K(+):H(+) symporter. This is Probable potassium transport system protein Kup from Acinetobacter baylyi (strain ATCC 33305 / BD413 / ADP1).